The chain runs to 425 residues: Glutamyl-tRNA reductase (425 aa).

Residues 49–52, S109, 114–116, and Q120 each bind substrate; these read TCNR and EGQ. C50 serves as the catalytic Nucleophile. 189 to 194 contributes to the NADP(+) binding site; that stretch reads GAGETG.

Belongs to the glutamyl-tRNA reductase family. In terms of assembly, homodimer.

The catalysed reaction is (S)-4-amino-5-oxopentanoate + tRNA(Glu) + NADP(+) = L-glutamyl-tRNA(Glu) + NADPH + H(+). It functions in the pathway porphyrin-containing compound metabolism; protoporphyrin-IX biosynthesis; 5-aminolevulinate from L-glutamyl-tRNA(Glu): step 1/2. It participates in porphyrin-containing compound metabolism; chlorophyll biosynthesis. Catalyzes the NADPH-dependent reduction of glutamyl-tRNA(Glu) to glutamate 1-semialdehyde (GSA). This chain is Glutamyl-tRNA reductase, found in Chlorobium phaeobacteroides (strain DSM 266 / SMG 266 / 2430).